The chain runs to 77 residues: Conotoxin ArMKLT2-022 (77 aa).

The N-terminal stretch at 1-22 is a signal peptide; that stretch reads MKLTCVLIVAVLFLTACQLIAA. A propeptide spanning residues 23-46 is cleaved from the precursor; that stretch reads DDSRDLKRFSRRKMRDGMLNTKNT. Q49 carries the post-translational modification Pyrrolidone carboxylic acid. 3 disulfides stabilise this stretch: C50-C65, C57-C68, and C64-C73.

This sequence belongs to the conotoxin O1 superfamily. In terms of tissue distribution, expressed by the venom duct.

Its subcellular location is the secreted. The polypeptide is Conotoxin ArMKLT2-022 (Conus arenatus (Sand-dusted cone)).